The chain runs to 377 residues: Probable pectin lyase D (377 aa).

A signal peptide spans 1–17; it reads MRVSAFALLAAAATAAA. Cystine bridges form between Cys-80–Cys-99 and Cys-89–Cys-223. Residue Asn-126 is glycosylated (N-linked (GlcNAc...) asparagine). The active site involves Arg-253. Cys-321 and Cys-329 are oxidised to a cystine.

This sequence belongs to the polysaccharide lyase 1 family.

It localises to the secreted. It carries out the reaction Eliminative cleavage of (1-&gt;4)-alpha-D-galacturonan methyl ester to give oligosaccharides with 4-deoxy-6-O-methyl-alpha-D-galact-4-enuronosyl groups at their non-reducing ends.. Its function is as follows. Pectinolytic enzymes consist of four classes of enzymes: pectin lyase, polygalacturonase, pectin methylesterase and rhamnogalacturonase. Among pectinolytic enzymes, pectin lyase is the most important in depolymerization of pectin, since it cleaves internal glycosidic bonds of highly methylated pectins. In Emericella nidulans (strain FGSC A4 / ATCC 38163 / CBS 112.46 / NRRL 194 / M139) (Aspergillus nidulans), this protein is Probable pectin lyase D (pelD).